Reading from the N-terminus, the 549-residue chain is Cation/acetate symporter ActP (549 aa).

13 helical membrane-spanning segments follow: residues 33–53, 77–97, 103–123, 148–168, 183–203, 206–226, 262–282, 303–323, 355–375, 404–424, 428–448, 464–484, and 493–513; these read WQAIIMFLIFVVFTLGITYWA, LAIAGDYMSAASFLGISALVF, GLIYSLGFLVGWPIILFLIAE, ILSACGSLVVVALYLIAQMVG, IAVVLVGVLMMMYVLFGGMLA, WVQIIKAVLLLFGASFMAFMV, ISALSLGLGLMFGTAGLPHIL, GFMGYFYILTFIIGFGAIMLV, LFLGFISAVAFATILAVVAGL, VSKITVLILGVIAIILGVLFE, IAFMVGLAFAIAASCNFPIIL, GGWLGLITAVVLMILGPTIWV, and IFPYEYPALFSITVAFLGIWF.

This sequence belongs to the sodium:solute symporter (SSF) (TC 2.A.21) family.

The protein resides in the cell inner membrane. Transports acetate. The polypeptide is Cation/acetate symporter ActP (Escherichia fergusonii (strain ATCC 35469 / DSM 13698 / CCUG 18766 / IAM 14443 / JCM 21226 / LMG 7866 / NBRC 102419 / NCTC 12128 / CDC 0568-73)).